A 364-amino-acid chain; its full sequence is Chorismate synthase (364 aa).

Positions 48 and 54 each coordinate NADP(+). Residues 125 to 127 (RSS), 238 to 239 (NA), glycine 278, 293 to 297 (KPTSS), and arginine 319 each bind FMN.

Belongs to the chorismate synthase family. In terms of assembly, homotetramer. FMNH2 serves as cofactor.

The catalysed reaction is 5-O-(1-carboxyvinyl)-3-phosphoshikimate = chorismate + phosphate. It participates in metabolic intermediate biosynthesis; chorismate biosynthesis; chorismate from D-erythrose 4-phosphate and phosphoenolpyruvate: step 7/7. In terms of biological role, catalyzes the anti-1,4-elimination of the C-3 phosphate and the C-6 proR hydrogen from 5-enolpyruvylshikimate-3-phosphate (EPSP) to yield chorismate, which is the branch point compound that serves as the starting substrate for the three terminal pathways of aromatic amino acid biosynthesis. This reaction introduces a second double bond into the aromatic ring system. The protein is Chorismate synthase of Marinobacter nauticus (strain ATCC 700491 / DSM 11845 / VT8) (Marinobacter aquaeolei).